We begin with the raw amino-acid sequence, 886 residues long: uncharacterized protein (886 aa).

An N-terminal signal peptide occupies residues Met-1–Gly-20. Transmembrane regions (helical) follow at residues Val-520 to Val-540, Leu-609 to Ile-629, Val-647 to Met-667, Ile-680 to Ile-700, and Leu-779 to Val-799. The interval Glu-856–Asp-886 is disordered. Positions Asn-875 to Asp-886 are enriched in basic and acidic residues.

Belongs to the TrbL/VirB6 family.

It localises to the cell membrane. This is an uncharacterized protein from Rickettsia bellii (strain RML369-C).